A 446-amino-acid chain; its full sequence is Phosphoglucosamine mutase (446 aa).

Ser-101 functions as the Phosphoserine intermediate in the catalytic mechanism. Residues Ser-101, Asp-240, Asp-242, and Asp-244 each coordinate Mg(2+). Ser-101 is modified (phosphoserine).

It belongs to the phosphohexose mutase family. It depends on Mg(2+) as a cofactor. Activated by phosphorylation.

The enzyme catalyses alpha-D-glucosamine 1-phosphate = D-glucosamine 6-phosphate. Catalyzes the conversion of glucosamine-6-phosphate to glucosamine-1-phosphate. This is Phosphoglucosamine mutase from Pseudomonas putida (strain W619).